A 594-amino-acid chain; its full sequence is Shugoshin (594 aa).

A coiled-coil region spans residues 38–61; it reads KITDMETKVSELVQENVSLRSRLS. 4 disordered regions span residues 104 to 178, 201 to 266, 342 to 380, and 519 to 549; these read SGIH…KSSR, QLPI…TNKN, SKIKHSMKHPRTKLKGGQDDIMPHTDYDKDDEKRERRTR, and TKQQAIENNSSDPNVSDENENSNVKPTRTKQ. Residues 220–240 are a coiled coil; the sequence is EEESQENKHTKEEREDEGKEN. Over residues 224–239 the composition is skewed to basic and acidic residues; sequence QENKHTKEEREDEGKE. Positions 252 to 261 are enriched in polar residues; it reads SVTNTGTECS. Residues 343 to 355 are compositionally biased toward basic residues; that stretch reads KIKHSMKHPRTKL. Basic and acidic residues predominate over residues 357–376; the sequence is GGQDDIMPHTDYDKDDEKRE. Polar residues-rich tracts occupy residues 519 to 532 and 539 to 549; these read TKQQAIENNSSDPN and NSNVKPTRTKQ.

The protein belongs to the shugoshin family.

The protein localises to the nucleus. Its subcellular location is the chromosome. It localises to the centromere. Plays a central role in chromosome cohesion during cell division by preventing premature dissociation of cohesin complex from centromeres after prophase, when most of cohesin complex dissociates from chromosomes arms. This Kluyveromyces lactis (strain ATCC 8585 / CBS 2359 / DSM 70799 / NBRC 1267 / NRRL Y-1140 / WM37) (Yeast) protein is Shugoshin (SGO1).